The primary structure comprises 549 residues: Glucose-6-phosphate isomerase (549 aa).

Residue Glu-355 is the Proton donor of the active site. Catalysis depends on residues His-386 and Lys-514.

It belongs to the GPI family.

Its subcellular location is the cytoplasm. The catalysed reaction is alpha-D-glucose 6-phosphate = beta-D-fructose 6-phosphate. It participates in carbohydrate biosynthesis; gluconeogenesis. Its pathway is carbohydrate degradation; glycolysis; D-glyceraldehyde 3-phosphate and glycerone phosphate from D-glucose: step 2/4. In terms of biological role, catalyzes the reversible isomerization of glucose-6-phosphate to fructose-6-phosphate. This Salmonella paratyphi B (strain ATCC BAA-1250 / SPB7) protein is Glucose-6-phosphate isomerase.